The primary structure comprises 702 residues: Methionine--tRNA ligase (702 aa).

The short motif at 14 to 24 (PYANGPVHLGH) is the 'HIGH' region element. 4 residues coordinate Zn(2+): Cys146, Cys149, Cys159, and Cys162. A 'KMSKS' region motif is present at residues 344–348 (KFSKS). ATP is bound at residue Lys347. The tRNA-binding domain maps to 601–702 (DFQKVDLRAA…GEKINGSSVQ (102 aa)).

This sequence belongs to the class-I aminoacyl-tRNA synthetase family. MetG type 1 subfamily. As to quaternary structure, homodimer. Zn(2+) is required as a cofactor.

The protein localises to the cytoplasm. The enzyme catalyses tRNA(Met) + L-methionine + ATP = L-methionyl-tRNA(Met) + AMP + diphosphate. Its function is as follows. Is required not only for elongation of protein synthesis but also for the initiation of all mRNA translation through initiator tRNA(fMet) aminoacylation. The sequence is that of Methionine--tRNA ligase from Chlorobium phaeovibrioides (strain DSM 265 / 1930) (Prosthecochloris vibrioformis (strain DSM 265)).